The chain runs to 274 residues: Formamidopyrimidine-DNA glycosylase (274 aa).

Pro2 serves as the catalytic Schiff-base intermediate with DNA. The active-site Proton donor is the Glu3. Lys57 acts as the Proton donor; for beta-elimination activity in catalysis. Residues His92, Arg111, and Lys152 each coordinate DNA. The FPG-type zinc-finger motif lies at 237–271 (QVYGRKGEECRECGTLIQAKVIGQRNSYFCPDCQP). Arg261 functions as the Proton donor; for delta-elimination activity in the catalytic mechanism.

The protein belongs to the FPG family. Monomer. Zn(2+) serves as cofactor.

It catalyses the reaction Hydrolysis of DNA containing ring-opened 7-methylguanine residues, releasing 2,6-diamino-4-hydroxy-5-(N-methyl)formamidopyrimidine.. The catalysed reaction is 2'-deoxyribonucleotide-(2'-deoxyribose 5'-phosphate)-2'-deoxyribonucleotide-DNA = a 3'-end 2'-deoxyribonucleotide-(2,3-dehydro-2,3-deoxyribose 5'-phosphate)-DNA + a 5'-end 5'-phospho-2'-deoxyribonucleoside-DNA + H(+). In terms of biological role, involved in base excision repair of DNA damaged by oxidation or by mutagenic agents. Acts as a DNA glycosylase that recognizes and removes damaged bases. Has a preference for oxidized purines, such as 7,8-dihydro-8-oxoguanine (8-oxoG). Has AP (apurinic/apyrimidinic) lyase activity and introduces nicks in the DNA strand. Cleaves the DNA backbone by beta-delta elimination to generate a single-strand break at the site of the removed base with both 3'- and 5'-phosphates. The sequence is that of Formamidopyrimidine-DNA glycosylase from Haemophilus ducreyi (strain 35000HP / ATCC 700724).